The primary structure comprises 135 residues: Putative pre-16S rRNA nuclease (135 aa).

The protein belongs to the YqgF nuclease family.

The protein resides in the cytoplasm. Could be a nuclease involved in processing of the 5'-end of pre-16S rRNA. In Maridesulfovibrio salexigens (strain ATCC 14822 / DSM 2638 / NCIMB 8403 / VKM B-1763) (Desulfovibrio salexigens), this protein is Putative pre-16S rRNA nuclease.